Reading from the N-terminus, the 220-residue chain is ATP phosphoribosyltransferase (220 aa).

It belongs to the ATP phosphoribosyltransferase family. Short subfamily. As to quaternary structure, heteromultimer composed of HisG and HisZ subunits.

It is found in the cytoplasm. The enzyme catalyses 1-(5-phospho-beta-D-ribosyl)-ATP + diphosphate = 5-phospho-alpha-D-ribose 1-diphosphate + ATP. It participates in amino-acid biosynthesis; L-histidine biosynthesis; L-histidine from 5-phospho-alpha-D-ribose 1-diphosphate: step 1/9. Functionally, catalyzes the condensation of ATP and 5-phosphoribose 1-diphosphate to form N'-(5'-phosphoribosyl)-ATP (PR-ATP). Has a crucial role in the pathway because the rate of histidine biosynthesis seems to be controlled primarily by regulation of HisG enzymatic activity. This is ATP phosphoribosyltransferase from Janthinobacterium sp. (strain Marseille) (Minibacterium massiliensis).